The following is a 599-amino-acid chain: Elongation factor 4 (599 aa).

Residues 5–187 form the tr-type G domain; sequence STIRNFAIIA…AIVHRLPAPV (183 aa). GTP-binding positions include 17-22 and 134-137; these read DHGKST and NKAD.

This sequence belongs to the TRAFAC class translation factor GTPase superfamily. Classic translation factor GTPase family. LepA subfamily.

It is found in the cell inner membrane. It catalyses the reaction GTP + H2O = GDP + phosphate + H(+). Functionally, required for accurate and efficient protein synthesis under certain stress conditions. May act as a fidelity factor of the translation reaction, by catalyzing a one-codon backward translocation of tRNAs on improperly translocated ribosomes. Back-translocation proceeds from a post-translocation (POST) complex to a pre-translocation (PRE) complex, thus giving elongation factor G a second chance to translocate the tRNAs correctly. Binds to ribosomes in a GTP-dependent manner. The polypeptide is Elongation factor 4 (Anaplasma marginale (strain Florida)).